The primary structure comprises 326 residues: Pyruvate dehydrogenase E1 component subunit beta (326 aa).

E59 is a binding site for thiamine diphosphate.

As to quaternary structure, heterodimer of an alpha and a beta chain. The cofactor is thiamine diphosphate.

It catalyses the reaction N(6)-[(R)-lipoyl]-L-lysyl-[protein] + pyruvate + H(+) = N(6)-[(R)-S(8)-acetyldihydrolipoyl]-L-lysyl-[protein] + CO2. Functionally, the pyruvate dehydrogenase complex catalyzes the overall conversion of pyruvate to acetyl-CoA and CO(2). It contains multiple copies of three enzymatic components: pyruvate dehydrogenase (E1), dihydrolipoamide acetyltransferase (E2) and lipoamide dehydrogenase (E3). This Rickettsia felis (strain ATCC VR-1525 / URRWXCal2) (Rickettsia azadi) protein is Pyruvate dehydrogenase E1 component subunit beta (pdhB).